The following is a 249-amino-acid chain: 1-(5-phosphoribosyl)-5-[(5-phosphoribosylamino)methylideneamino] imidazole-4-carboxamide isomerase (249 aa).

The Proton acceptor role is filled by Asp-8. Residue Asp-130 is the Proton donor of the active site.

The protein belongs to the HisA/HisF family.

Its subcellular location is the cytoplasm. It catalyses the reaction 1-(5-phospho-beta-D-ribosyl)-5-[(5-phospho-beta-D-ribosylamino)methylideneamino]imidazole-4-carboxamide = 5-[(5-phospho-1-deoxy-D-ribulos-1-ylimino)methylamino]-1-(5-phospho-beta-D-ribosyl)imidazole-4-carboxamide. It participates in amino-acid biosynthesis; L-histidine biosynthesis; L-histidine from 5-phospho-alpha-D-ribose 1-diphosphate: step 4/9. The sequence is that of 1-(5-phosphoribosyl)-5-[(5-phosphoribosylamino)methylideneamino] imidazole-4-carboxamide isomerase from Chromohalobacter salexigens (strain ATCC BAA-138 / DSM 3043 / CIP 106854 / NCIMB 13768 / 1H11).